Here is a 295-residue protein sequence, read N- to C-terminus: Probable protein phosphatase 2C 6 (295 aa).

Positions 23–294 constitute a PPM-type phosphatase domain; sequence QYAATHMQGW…DNMTCILIQF (272 aa). Mn(2+) contacts are provided by Asp-57, Gly-58, Asp-237, and Asp-285.

The protein belongs to the PP2C family. It depends on Mg(2+) as a cofactor. Mn(2+) is required as a cofactor.

The protein resides in the membrane. It carries out the reaction O-phospho-L-seryl-[protein] + H2O = L-seryl-[protein] + phosphate. The enzyme catalyses O-phospho-L-threonyl-[protein] + H2O = L-threonyl-[protein] + phosphate. In terms of biological role, enzyme with a broad specificity. The polypeptide is Probable protein phosphatase 2C 6 (Paramecium tetraurelia).